The chain runs to 248 residues: FCS-Like Zinc finger 14 (248 aa).

The span at 85 to 94 (VCRSEPNQPG) shows a compositional bias: polar residues. Positions 85-108 (VCRSEPNQPGRSDPVQFMSHGGST) are disordered. The FLZ-type zinc finger occupies 181 to 224 (GFLNSCYLCRKKLHGQDIFIYRGEKAFCSTECRSSHIANDERKE).

It belongs to the FLZ family. In terms of assembly, interacts with KIN10 and KIN11 via its FLZ-type zinc finger domain. Interacts with KINB1, KINB2 and KINB3 via its N-terminal part.

It localises to the cytoplasm. It is found in the nucleus. May act as an adapter to facilitate the interaction of SnRK1 complex with effector proteins, conferring tissue- and stimulus-type specific differences in the SnRK1 regulation pathway. The polypeptide is FCS-Like Zinc finger 14 (Arabidopsis thaliana (Mouse-ear cress)).